A 20-amino-acid chain; its full sequence is Hemoglobinase-like protein 1 (20 aa).

It belongs to the peptidase C13 family.

It catalyses the reaction Hydrolysis of proteins and small molecule substrates at -Asn-|-Xaa- bonds.. In Fasciola hepatica (Liver fluke), this protein is Hemoglobinase-like protein 1.